The following is a 311-amino-acid chain: Aspartate carbamoyltransferase catalytic subunit (311 aa).

Arginine 59 and threonine 60 together coordinate carbamoyl phosphate. L-aspartate is bound at residue lysine 87. 3 residues coordinate carbamoyl phosphate: arginine 109, histidine 139, and glutamine 142. Arginine 172 and arginine 224 together coordinate L-aspartate. Carbamoyl phosphate-binding residues include alanine 265 and proline 266.

It belongs to the aspartate/ornithine carbamoyltransferase superfamily. ATCase family. As to quaternary structure, heterododecamer (2C3:3R2) of six catalytic PyrB chains organized as two trimers (C3), and six regulatory PyrI chains organized as three dimers (R2).

The enzyme catalyses carbamoyl phosphate + L-aspartate = N-carbamoyl-L-aspartate + phosphate + H(+). It participates in pyrimidine metabolism; UMP biosynthesis via de novo pathway; (S)-dihydroorotate from bicarbonate: step 2/3. Its function is as follows. Catalyzes the condensation of carbamoyl phosphate and aspartate to form carbamoyl aspartate and inorganic phosphate, the committed step in the de novo pyrimidine nucleotide biosynthesis pathway. The protein is Aspartate carbamoyltransferase catalytic subunit of Streptococcus pyogenes serotype M1.